A 291-amino-acid chain; its full sequence is Formamidopyrimidine-DNA glycosylase (291 aa).

Catalysis depends on proline 2, which acts as the Schiff-base intermediate with DNA. Glutamate 3 acts as the Proton donor in catalysis. Lysine 61 acts as the Proton donor; for beta-elimination activity in catalysis. Residues histidine 103, arginine 123, and arginine 165 each coordinate DNA. An FPG-type zinc finger spans residues 251-285 (EVYGRGGQACSRCASTIRRDAFMNRSSFSCPACQP). Catalysis depends on arginine 275, which acts as the Proton donor; for delta-elimination activity.

The protein belongs to the FPG family. As to quaternary structure, monomer. The cofactor is Zn(2+).

It carries out the reaction Hydrolysis of DNA containing ring-opened 7-methylguanine residues, releasing 2,6-diamino-4-hydroxy-5-(N-methyl)formamidopyrimidine.. The catalysed reaction is 2'-deoxyribonucleotide-(2'-deoxyribose 5'-phosphate)-2'-deoxyribonucleotide-DNA = a 3'-end 2'-deoxyribonucleotide-(2,3-dehydro-2,3-deoxyribose 5'-phosphate)-DNA + a 5'-end 5'-phospho-2'-deoxyribonucleoside-DNA + H(+). Involved in base excision repair of DNA damaged by oxidation or by mutagenic agents. Acts as a DNA glycosylase that recognizes and removes damaged bases. Has a preference for oxidized purines, such as 7,8-dihydro-8-oxoguanine (8-oxoG). Has AP (apurinic/apyrimidinic) lyase activity and introduces nicks in the DNA strand. Cleaves the DNA backbone by beta-delta elimination to generate a single-strand break at the site of the removed base with both 3'- and 5'-phosphates. This chain is Formamidopyrimidine-DNA glycosylase, found in Parafrankia sp. (strain EAN1pec).